Reading from the N-terminus, the 149-residue chain is Oligosaccharyltransferase complex subunit ostc (149 aa).

Residues 1–32 are Cytoplasmic-facing; sequence MESLYRVPFTVLECPNLKLKKPSWLHMPSAMT. The chain crosses the membrane as a helical span at residues 33–53; that stretch reads VYAMVVVSYFLITGGIIYDVI. The Extracellular portion of the chain corresponds to 54-83; that stretch reads VEPPSVGSMTDEHGHQRPVAFLAYRVNGQY. Residues 84–104 traverse the membrane as a helical segment; that stretch reads IMEGLASSFLFTMGGLGFIIL. At 105–117 the chain is on the cytoplasmic side; it reads DRSNAPNIPKLNR. Residues 118–138 form a helical membrane-spanning segment; the sequence is FLLLFIGFVCVLLSFFMARVF. The Extracellular segment spans residues 139-149; it reads MRMKLPGYLMG.

This sequence belongs to the OSTC family. As to quaternary structure, specific component of the STT3A-containing form of the oligosaccharyltransferase (OST) complex.

It is found in the membrane. It functions in the pathway protein modification; protein glycosylation. Specific component of the STT3A-containing form of the oligosaccharyl transferase (OST) complex that catalyzes the initial transfer of a defined glycan (Glc(3)Man(9)GlcNAc(2) in eukaryotes) from the lipid carrier dolichol-pyrophosphate to an asparagine residue within an Asn-X-Ser/Thr consensus motif in nascent polypeptide chains, the first step in protein N-glycosylation. N-glycosylation occurs cotranslationally and the complex associates with the Sec61 complex at the channel-forming translocon complex that mediates protein translocation across the endoplasmic reticulum (ER). All subunits are required for a maximal enzyme activity. The polypeptide is Oligosaccharyltransferase complex subunit ostc (Xenopus tropicalis (Western clawed frog)).